The sequence spans 353 residues: D-alanine--D-alanine ligase (353 aa).

The region spanning 141–349 (KAALAGAGLA…LEQLVHELLE (209 aa)) is the ATP-grasp domain. Residue 176–231 (ESGLCYPCFIKPANLGSSVGISKARNREELIHGLRLAATLDPRLVVEQGVQARELE) participates in ATP binding. Residues Asp-302, Glu-316, and Asn-318 each coordinate Mg(2+).

It belongs to the D-alanine--D-alanine ligase family. Requires Mg(2+) as cofactor. Mn(2+) is required as a cofactor.

It is found in the cytoplasm. It catalyses the reaction 2 D-alanine + ATP = D-alanyl-D-alanine + ADP + phosphate + H(+). It functions in the pathway cell wall biogenesis; peptidoglycan biosynthesis. Its function is as follows. Cell wall formation. This chain is D-alanine--D-alanine ligase, found in Parasynechococcus marenigrum (strain WH8102).